A 358-amino-acid chain; its full sequence is L-lysine 3-hydroxylase (358 aa).

Positions 178, 180, and 314 each coordinate Fe cation. 2-oxoglutarate is bound at residue Arg328.

Belongs to the clavaminate synthase family. The cofactor is Fe(2+).

It carries out the reaction L-lysine + 2-oxoglutarate + O2 = (3S)-3-hydroxy-L-lysine + succinate + CO2. Alpha-ketoglutarate-dependent dioxygenase that in vitro catalyzes the regio- and stereoselective hydroxylation of L-lysine, leading to (3S)-3-hydroxy-L-lysine. Can also use (5R)-5-hydroxy-L-lysine as substrate, but neither D-lysine nor L-ornithine. The polypeptide is L-lysine 3-hydroxylase (Catenulispora acidiphila (strain DSM 44928 / JCM 14897 / NBRC 102108 / NRRL B-24433 / ID139908)).